Here is a 352-residue protein sequence, read N- to C-terminus: MKKVCIIGASGFTGGELLRLLLSHSGVEVVCATSRKFKGEFVYRVHPNLRGFTQLKFVEPTIDAALKADVVFLALPHGESVKWVPKLYESGVAVFDLSADFRLKDPNAYVEWYKWPQPHPYPDLLQKAVYGQPELHRDELVGAKLVAVPGCMATASILMLAPLAKYGQLGEVPPVVDAKIGSSGAGAEGSIVDLHSYRTYVVRPYEPVHHRHIAEIEQELSRLAGRRVRVAFTPHAVDIVRGIFTTGHVYLDKLPAEADMWKYYRSMYGDSKFIRIVKDRLGISRYPNVKYVLGSNVVDVGFELDPRLNRVVTFAAIDNLVRGASGQAVQAFNVAMGFPEDEGLRQIPVAPI.

Residues 10–13 (SGFT) and 34–36 (SRK) contribute to the NADP(+) site. C151 is an active-site residue. N319 serves as a coordination point for NADP(+).

It belongs to the NAGSA dehydrogenase family. Type 1 subfamily. LysY sub-subfamily.

The protein localises to the cytoplasm. It catalyses the reaction [amino-group carrier protein]-C-terminal-N-(1-carboxy-5-oxopentan-1-yl)-L-glutamine + phosphate + NADP(+) = [amino-group carrier protein]-C-terminal-N-(1-carboxy-5-phosphooxy-5-oxopentan-1-yl)-L-glutamine + NADPH + H(+). The enzyme catalyses [amino-group carrier protein]-C-terminal-gamma-(L-glutamyl-5-semialdehyde)-L-glutamate + phosphate + NADP(+) = [amino-group carrier protein]-C-terminal-gamma-(5-phospho-L-glutamyl)-L-glutamate + NADPH + H(+). Its pathway is amino-acid biosynthesis; L-lysine biosynthesis via AAA pathway; L-lysine from L-alpha-aminoadipate (Thermus route): step 3/5. It functions in the pathway amino-acid biosynthesis; L-arginine biosynthesis. Functionally, involved in both the arginine and lysine biosynthetic pathways. The polypeptide is Putative [LysW]-L-2-aminoadipate/[LysW]-L-glutamate phosphate reductase (Pyrobaculum neutrophilum (strain DSM 2338 / JCM 9278 / NBRC 100436 / V24Sta) (Thermoproteus neutrophilus)).